We begin with the raw amino-acid sequence, 367 residues long: GDSL esterase/lipase 3 (367 aa).

Positions 1-23 (MVRLVLIIFFVYTIILSIGSINC) are cleaved as a signal peptide. The active-site Nucleophile is the Ser-42. N-linked (GlcNAc...) asparagine glycans are attached at residues Asn-175, Asn-194, and Asn-321. Catalysis depends on residues Asp-329 and His-332. The N-linked (GlcNAc...) asparagine glycan is linked to Asn-351.

This sequence belongs to the 'GDSL' lipolytic enzyme family.

It is found in the secreted. The chain is GDSL esterase/lipase 3 (GLIP3) from Arabidopsis thaliana (Mouse-ear cress).